The primary structure comprises 389 residues: Probable protein phosphatase 2C 47 (389 aa).

Residues 76-346 form the PPM-type phosphatase domain; the sequence is RSGSFADIGP…DNLTVIVVCF (271 aa). The Mn(2+) site is built by Asp120, Gly121, Asp294, and Asp337.

This sequence belongs to the PP2C family. Requires Mg(2+) as cofactor. Mn(2+) is required as a cofactor.

The enzyme catalyses O-phospho-L-seryl-[protein] + H2O = L-seryl-[protein] + phosphate. It catalyses the reaction O-phospho-L-threonyl-[protein] + H2O = L-threonyl-[protein] + phosphate. The sequence is that of Probable protein phosphatase 2C 47 from Oryza sativa subsp. japonica (Rice).